The sequence spans 201 residues: Holliday junction branch migration complex subunit RuvA (201 aa).

Residues 1–61 (MIEFVKGTID…EDAFSLYGFS (61 aa)) are domain I. A domain II region spans residues 62–140 (TREEKALFTK…DVVPEMIDNL (79 aa)). The flexible linker stretch occupies residues 141–150 (FNHEARIEKQ). The tract at residues 151-201 (EAETALDEALEALRVLGYAEKEIKKVLPHLKEETALSTDQYVKKALQKLLK) is domain III.

Belongs to the RuvA family. In terms of assembly, homotetramer. Forms an RuvA(8)-RuvB(12)-Holliday junction (HJ) complex. HJ DNA is sandwiched between 2 RuvA tetramers; dsDNA enters through RuvA and exits via RuvB. An RuvB hexamer assembles on each DNA strand where it exits the tetramer. Each RuvB hexamer is contacted by two RuvA subunits (via domain III) on 2 adjacent RuvB subunits; this complex drives branch migration. In the full resolvosome a probable DNA-RuvA(4)-RuvB(12)-RuvC(2) complex forms which resolves the HJ.

It is found in the cytoplasm. Functionally, the RuvA-RuvB-RuvC complex processes Holliday junction (HJ) DNA during genetic recombination and DNA repair, while the RuvA-RuvB complex plays an important role in the rescue of blocked DNA replication forks via replication fork reversal (RFR). RuvA specifically binds to HJ cruciform DNA, conferring on it an open structure. The RuvB hexamer acts as an ATP-dependent pump, pulling dsDNA into and through the RuvAB complex. HJ branch migration allows RuvC to scan DNA until it finds its consensus sequence, where it cleaves and resolves the cruciform DNA. In Bacillus velezensis (strain DSM 23117 / BGSC 10A6 / LMG 26770 / FZB42) (Bacillus amyloliquefaciens subsp. plantarum), this protein is Holliday junction branch migration complex subunit RuvA.